Consider the following 130-residue polypeptide: MKAFLGFLLLSYLAIILVHDNVNCIIFGIFDPCFYKISSKISNDYSSMQCSHPISYIGYEMFIQKWKDDNYWPLIIRHCCFYLVFSIAFASCVAFAIRRNLHLSTTMKLLGLLSILVWLAQPVLNQPFPT.

The next 3 helical transmembrane spans lie at 4–24 (FLGF…NVNC), 75–95 (IIRH…CVAF), and 109–129 (LLGL…QPFP).

This sequence belongs to the asfivirus MGF 110 family.

It localises to the host membrane. Its function is as follows. Plays a role in virus cell tropism, and may be required for efficient virus replication in macrophages. This is Protein MGF 360-1L from Ornithodoros (relapsing fever ticks).